Here is a 338-residue protein sequence, read N- to C-terminus: RNA 3'-terminal phosphate cyclase (338 aa).

Residues Gln103 and 283 to 287 each bind ATP; that span reads YLADQ. Residue His308 is the Tele-AMP-histidine intermediate of the active site.

Belongs to the RNA 3'-terminal cyclase family. Type 1 subfamily.

Its subcellular location is the cytoplasm. The catalysed reaction is a 3'-end 3'-phospho-ribonucleotide-RNA + ATP = a 3'-end 2',3'-cyclophospho-ribonucleotide-RNA + AMP + diphosphate. Functionally, catalyzes the conversion of 3'-phosphate to a 2',3'-cyclic phosphodiester at the end of RNA. The mechanism of action of the enzyme occurs in 3 steps: (A) adenylation of the enzyme by ATP; (B) transfer of adenylate to an RNA-N3'P to produce RNA-N3'PP5'A; (C) and attack of the adjacent 2'-hydroxyl on the 3'-phosphorus in the diester linkage to produce the cyclic end product. The biological role of this enzyme is unknown but it is likely to function in some aspects of cellular RNA processing. The chain is RNA 3'-terminal phosphate cyclase from Escherichia coli O7:K1 (strain IAI39 / ExPEC).